The following is a 286-amino-acid chain: Protein GrpE (286 aa).

2 disordered regions span residues 1 to 51 and 260 to 286; these read MSED…ETTA and VAAP…QPTT. 2 stretches are compositionally biased toward low complexity: residues 39 to 50 and 271 to 286; these read QPSSTPQTPETT and TEST…QPTT.

It belongs to the GrpE family. As to quaternary structure, homodimer.

Its subcellular location is the cytoplasm. Participates actively in the response to hyperosmotic and heat shock by preventing the aggregation of stress-denatured proteins, in association with DnaK and GrpE. It is the nucleotide exchange factor for DnaK and may function as a thermosensor. Unfolded proteins bind initially to DnaJ; upon interaction with the DnaJ-bound protein, DnaK hydrolyzes its bound ATP, resulting in the formation of a stable complex. GrpE releases ADP from DnaK; ATP binding to DnaK triggers the release of the substrate protein, thus completing the reaction cycle. Several rounds of ATP-dependent interactions between DnaJ, DnaK and GrpE are required for fully efficient folding. This is Protein GrpE from Gloeothece citriformis (strain PCC 7424) (Cyanothece sp. (strain PCC 7424)).